We begin with the raw amino-acid sequence, 212 residues long: Protein YIPF5 homolog (212 aa).

Topologically, residues M1–D79 are cytoplasmic. Residues T80–G100 form a helical membrane-spanning segment. Residue K101 is a topological domain, lumenal. Residues I102–L122 form a helical membrane-spanning segment. Residues N123 to K128 lie on the Cytoplasmic side of the membrane. Residues G129–L149 form a helical membrane-spanning segment. The Lumenal portion of the chain corresponds to S150 to G163. The chain crosses the membrane as a helical span at residues Y164–L186. The Cytoplasmic segment spans residues S187–Q191. A helical transmembrane segment spans residues R192 to F212.

This sequence belongs to the YIP1 family.

The protein resides in the endoplasmic reticulum membrane. It is found in the golgi apparatus. Its subcellular location is the cis-Golgi network membrane. Plays a role in transport between endoplasmic reticulum and Golgi. This Dictyostelium discoideum (Social amoeba) protein is Protein YIPF5 homolog (yipf5).